The sequence spans 109 residues: Thiosulfate sulfurtransferase GlpE (109 aa).

The Rhodanese domain occupies 17-105; the sequence is HQQTAVLVDI…WHRHFPAEVA (89 aa). The active-site Cysteine persulfide intermediate is the C65.

This sequence belongs to the GlpE family.

It is found in the cytoplasm. It carries out the reaction thiosulfate + hydrogen cyanide = thiocyanate + sulfite + 2 H(+). The enzyme catalyses thiosulfate + [thioredoxin]-dithiol = [thioredoxin]-disulfide + hydrogen sulfide + sulfite + 2 H(+). Its function is as follows. Transferase that catalyzes the transfer of sulfur from thiosulfate to thiophilic acceptors such as cyanide or dithiols. May function in a CysM-independent thiosulfate assimilation pathway by catalyzing the conversion of thiosulfate to sulfite, which can then be used for L-cysteine biosynthesis. The chain is Thiosulfate sulfurtransferase GlpE from Klebsiella pneumoniae (strain 342).